A 391-amino-acid polypeptide reads, in one-letter code: NADH-quinone oxidoreductase subunit D (391 aa).

Belongs to the complex I 49 kDa subunit family. In terms of assembly, NDH-1 is composed of 14 different subunits. Subunits NuoB, C, D, E, F, and G constitute the peripheral sector of the complex.

It localises to the cell inner membrane. The catalysed reaction is a quinone + NADH + 5 H(+)(in) = a quinol + NAD(+) + 4 H(+)(out). Its function is as follows. NDH-1 shuttles electrons from NADH, via FMN and iron-sulfur (Fe-S) centers, to quinones in the respiratory chain. The immediate electron acceptor for the enzyme in this species is believed to be ubiquinone. Couples the redox reaction to proton translocation (for every two electrons transferred, four hydrogen ions are translocated across the cytoplasmic membrane), and thus conserves the redox energy in a proton gradient. The sequence is that of NADH-quinone oxidoreductase subunit D from Rickettsia massiliae (strain Mtu5).